Reading from the N-terminus, the 146-residue chain is MMDINEIREYLPHRYPFLLVDRVVDLDVEGKCIRAYKNVSINEPFFNGHFPAHPIMPGVLIIEAMAQAAGILGFKMLDVKPADGTLYYFVGSDKLRFRQPVLPGDQLILEAKFISCKRQIWKFECQASVDGKPVCSAEIICAERKL.

Residue His-49 is part of the active site.

This sequence belongs to the thioester dehydratase family. FabZ subfamily.

The protein resides in the cytoplasm. It carries out the reaction a (3R)-hydroxyacyl-[ACP] = a (2E)-enoyl-[ACP] + H2O. In terms of biological role, involved in unsaturated fatty acids biosynthesis. Catalyzes the dehydration of short chain beta-hydroxyacyl-ACPs and long chain saturated and unsaturated beta-hydroxyacyl-ACPs. This is 3-hydroxyacyl-[acyl-carrier-protein] dehydratase FabZ from Pseudomonas fluorescens (strain ATCC BAA-477 / NRRL B-23932 / Pf-5).